We begin with the raw amino-acid sequence, 305 residues long: Oxygen-dependent coproporphyrinogen-III oxidase (305 aa).

Serine 92 is a binding site for substrate. Positions 96 and 106 each coordinate a divalent metal cation. Residue histidine 106 is the Proton donor of the active site. Substrate is bound at residue asparagine 108–arginine 110. 2 residues coordinate a divalent metal cation: histidine 145 and histidine 175. The interval tyrosine 239–glutamate 274 is important for dimerization. Glycine 257–arginine 259 lines the substrate pocket.

The protein belongs to the aerobic coproporphyrinogen-III oxidase family. As to quaternary structure, homodimer. Requires a divalent metal cation as cofactor.

It is found in the cytoplasm. The enzyme catalyses coproporphyrinogen III + O2 + 2 H(+) = protoporphyrinogen IX + 2 CO2 + 2 H2O. It functions in the pathway porphyrin-containing compound metabolism; protoporphyrin-IX biosynthesis; protoporphyrinogen-IX from coproporphyrinogen-III (O2 route): step 1/1. Its function is as follows. Involved in the heme biosynthesis. Catalyzes the aerobic oxidative decarboxylation of propionate groups of rings A and B of coproporphyrinogen-III to yield the vinyl groups in protoporphyrinogen-IX. In Xylella fastidiosa (strain Temecula1 / ATCC 700964), this protein is Oxygen-dependent coproporphyrinogen-III oxidase.